A 355-amino-acid polypeptide reads, in one-letter code: Chorismate synthase (355 aa).

Position 48 (Arg48) interacts with NADP(+). FMN-binding positions include 125 to 127 (RSS), 238 to 239 (NA), Gly278, 293 to 297 (KPASS), and Arg319.

Belongs to the chorismate synthase family. Homotetramer. It depends on FMNH2 as a cofactor.

It carries out the reaction 5-O-(1-carboxyvinyl)-3-phosphoshikimate = chorismate + phosphate. It functions in the pathway metabolic intermediate biosynthesis; chorismate biosynthesis; chorismate from D-erythrose 4-phosphate and phosphoenolpyruvate: step 7/7. In terms of biological role, catalyzes the anti-1,4-elimination of the C-3 phosphate and the C-6 proR hydrogen from 5-enolpyruvylshikimate-3-phosphate (EPSP) to yield chorismate, which is the branch point compound that serves as the starting substrate for the three terminal pathways of aromatic amino acid biosynthesis. This reaction introduces a second double bond into the aromatic ring system. In Baumannia cicadellinicola subsp. Homalodisca coagulata, this protein is Chorismate synthase.